A 387-amino-acid chain; its full sequence is Homoserine O-succinyltransferase (387 aa).

Residues 49-358 (NAILICHALS…DAEQGHDSFL (310 aa)) form the AB hydrolase-1 domain. S156 (nucleophile) is an active-site residue. R226 contributes to the substrate binding site. Catalysis depends on residues D321 and H354. Residue D355 participates in substrate binding.

Belongs to the AB hydrolase superfamily. MetX family. As to quaternary structure, homodimer.

It localises to the cytoplasm. It carries out the reaction L-homoserine + succinyl-CoA = O-succinyl-L-homoserine + CoA. Its pathway is amino-acid biosynthesis; L-methionine biosynthesis via de novo pathway; O-succinyl-L-homoserine from L-homoserine: step 1/1. With respect to regulation, requires MetW for activity. Its function is as follows. Transfers a succinyl group from succinyl-CoA to L-homoserine, forming succinyl-L-homoserine. This is Homoserine O-succinyltransferase from Acinetobacter baylyi (strain ATCC 33305 / BD413 / ADP1).